The following is a 91-amino-acid chain: Small ribosomal subunit protein uS19 (91 aa).

This sequence belongs to the universal ribosomal protein uS19 family.

Functionally, protein S19 forms a complex with S13 that binds strongly to the 16S ribosomal RNA. This is Small ribosomal subunit protein uS19 from Cupriavidus taiwanensis (strain DSM 17343 / BCRC 17206 / CCUG 44338 / CIP 107171 / LMG 19424 / R1) (Ralstonia taiwanensis (strain LMG 19424)).